The chain runs to 1192 residues: Probable phospholipid-transporting ATPase IM (1192 aa).

Over 1–44 (MFCSEKKLREVERIVKANDREYNEKFQYADNRIHTSKYNILTFL) the chain is Cytoplasmic. A helical membrane pass occupies residues 45–66 (PINLFEQFQRVANAYFLCLLIL). Topologically, residues 67–72 (QLIPEI) are exoplasmic loop. Residues 73 to 92 (SSLTWFTTIVPLVLVITMTA) form a helical membrane-spanning segment. The Cytoplasmic segment spans residues 93–276 (VKDATDDYFR…TSIDRLMNTL (184 aa)). The chain crosses the membrane as a helical span at residues 277-298 (VLWIFGFLICLGIILAIGNSIW). The Exoplasmic loop portion of the chain corresponds to 299 to 327 (ESQTGDQFRTFLFWNEGEKSSVFSGFLTF). A helical membrane pass occupies residues 328–349 (WSYIIILNTVVPISLYVSVEVI). The Cytoplasmic portion of the chain corresponds to 350–871 (RLGHSYFINW…GRWSYFRMCK (522 aa)). The active-site 4-aspartylphosphate intermediate is aspartate 392. ATP is bound by residues aspartate 392, lysine 393, threonine 394, glutamate 496, phenylalanine 537, lysine 560, arginine 594, threonine 674, glycine 675, aspartate 676, arginine 789, and lysine 795. Mg(2+) is bound at residue aspartate 392. Threonine 394 serves as a coordination point for Mg(2+). Residue aspartate 815 participates in Mg(2+) binding. ATP contacts are provided by asparagine 818 and aspartate 819. Residue aspartate 819 participates in Mg(2+) binding. Residues 872–892 (FLCYFFYKNFAFTLVHFWFGF) form a helical membrane-spanning segment. Residues 893 to 904 (FCGFSAQTVYDQ) are Exoplasmic loop-facing. A helical membrane pass occupies residues 905-924 (WFITLFNIVYTSLPVLAMGI). The Cytoplasmic segment spans residues 925 to 954 (FDQDVSDQNSVDCPQLYKPGQLNLLFNKRK). A helical transmembrane segment spans residues 955–976 (FFICVLHGIYTSLVLFFIPYGA). Residues 977–990 (FYNVAGEDGQHIAD) lie on the Exoplasmic loop side of the membrane. A helical membrane pass occupies residues 991–1013 (YQSFAVTMATSLVIVVSVQIALD). Residues 1014 to 1019 (TSYWTF) lie on the Cytoplasmic side of the membrane. Residues 1020–1040 (INHVFIWGSIAIYFSILFTMH) traverse the membrane as a helical segment. Topologically, residues 1041–1060 (SNGIFGIFPNQFPFVGNARH) are exoplasmic loop. A helical membrane pass occupies residues 1061-1085 (SLTQKCIWLVILLTTVASVMPVVAF). Over 1086–1192 (RFLKVDLYPT…SFSQDKTVKL (107 aa)) the chain is Cytoplasmic. Residues 1104–1125 (QKAQKKARPPSSRRPRTRRSSS) show a composition bias toward basic residues. Disordered stretches follow at residues 1104-1130 (QKAQ…RSGY) and 1143-1163 (TSGK…EKTH).

The protein belongs to the cation transport ATPase (P-type) (TC 3.A.3) family. Type IV subfamily. In terms of assembly, component of a P4-ATPase flippase complex which consists of a catalytic alpha subunit and an accessory beta subunit. Interacts with beta subunits TMEM30A and TMEM30B. Requires Mg(2+) as cofactor. Ubiquitously expressed at moderate levels.

It localises to the cell membrane. It is found in the golgi apparatus. It carries out the reaction ATP + H2O + phospholipidSide 1 = ADP + phosphate + phospholipidSide 2.. Functionally, component of a P4-ATPase flippase complex which catalyzes the hydrolysis of ATP coupled to the transport of aminophospholipids from the outer to the inner leaflet of various membranes and ensures the maintenance of asymmetric distribution of phospholipids. Phospholipid translocation also seems to be implicated in vesicle formation and in uptake of lipid signaling molecules. The sequence is that of Probable phospholipid-transporting ATPase IM (ATP8B4) from Homo sapiens (Human).